The primary structure comprises 332 residues: Malate dehydrogenase (332 aa).

Residues 11–16 and D35 contribute to the NAD(+) site; that span reads GAGNVG. Substrate contacts are provided by R97 and R103. NAD(+) contacts are provided by residues N110 and 133–135; that span reads VTN. Substrate is bound by residues N135 and R166. H190 functions as the Proton acceptor in the catalytic mechanism.

The protein belongs to the LDH/MDH superfamily. MDH type 3 family.

It catalyses the reaction (S)-malate + NAD(+) = oxaloacetate + NADH + H(+). Functionally, catalyzes the reversible oxidation of malate to oxaloacetate. This Hydrogenobaculum sp. (strain Y04AAS1) protein is Malate dehydrogenase.